We begin with the raw amino-acid sequence, 318 residues long: Ribose-phosphate pyrophosphokinase 1 (318 aa).

Residue 96-101 coordinates ATP; the sequence is RQDKKD. Positions 128, 130, 139, and 143 each coordinate Mg(2+). Residue His-130 coordinates ATP. The binding of phosphoribosylpyrophosphate stretch occupies residues 212–227; it reads KDRVAILVDDMADTCG.

It belongs to the ribose-phosphate pyrophosphokinase family. In terms of assembly, homodimer. The active form is probably a hexamer composed of 3 homodimers. Mg(2+) serves as cofactor.

It catalyses the reaction D-ribose 5-phosphate + ATP = 5-phospho-alpha-D-ribose 1-diphosphate + AMP + H(+). It functions in the pathway metabolic intermediate biosynthesis; 5-phospho-alpha-D-ribose 1-diphosphate biosynthesis; 5-phospho-alpha-D-ribose 1-diphosphate from D-ribose 5-phosphate (route I): step 1/1. With respect to regulation, activated by magnesium and inorganic phosphate. Its function is as follows. Catalyzes the synthesis of phosphoribosylpyrophosphate (PRPP) that is essential for nucleotide synthesis. The sequence is that of Ribose-phosphate pyrophosphokinase 1 (PRPS1) from Macaca fascicularis (Crab-eating macaque).